Reading from the N-terminus, the 197-residue chain is ATP-dependent Clp protease proteolytic subunit (197 aa).

The Nucleophile role is filled by Ser102. His127 is a catalytic residue.

This sequence belongs to the peptidase S14 family. Fourteen ClpP subunits assemble into 2 heptameric rings which stack back to back to give a disk-like structure with a central cavity, resembling the structure of eukaryotic proteasomes.

Its subcellular location is the cytoplasm. It carries out the reaction Hydrolysis of proteins to small peptides in the presence of ATP and magnesium. alpha-casein is the usual test substrate. In the absence of ATP, only oligopeptides shorter than five residues are hydrolyzed (such as succinyl-Leu-Tyr-|-NHMec, and Leu-Tyr-Leu-|-Tyr-Trp, in which cleavage of the -Tyr-|-Leu- and -Tyr-|-Trp bonds also occurs).. Functionally, cleaves peptides in various proteins in a process that requires ATP hydrolysis. Has a chymotrypsin-like activity. Plays a major role in the degradation of misfolded proteins. This chain is ATP-dependent Clp protease proteolytic subunit, found in Borreliella afzelii (strain PKo) (Borrelia afzelii).